A 63-amino-acid polypeptide reads, in one-letter code: Large ribosomal subunit protein bL28 (63 aa).

Belongs to the bacterial ribosomal protein bL28 family.

The protein is Large ribosomal subunit protein bL28 of Thermomicrobium roseum (strain ATCC 27502 / DSM 5159 / P-2).